A 643-amino-acid polypeptide reads, in one-letter code: uncharacterized protein (643 aa).

Residues 9 to 29 (IVLALLLLLLPVVCGDVSVYK) form a helical membrane-spanning segment.

It localises to the membrane. This is an uncharacterized protein from Methanocaldococcus jannaschii (strain ATCC 43067 / DSM 2661 / JAL-1 / JCM 10045 / NBRC 100440) (Methanococcus jannaschii).